An 812-amino-acid chain; its full sequence is Probable inorganic carbon transporter subunit DabA (812 aa).

The Zn(2+) site is built by Cys338, Asp340, His498, and Cys513.

The protein belongs to the inorganic carbon transporter (TC 9.A.2) DabA family. In terms of assembly, forms a complex with DabB. It depends on Zn(2+) as a cofactor.

It is found in the cell inner membrane. Functionally, part of an energy-coupled inorganic carbon pump. This is Probable inorganic carbon transporter subunit DabA from Methylobacterium sp. (strain 4-46).